Reading from the N-terminus, the 652-residue chain is Set1 complex component ash2 (652 aa).

The interval 1-32 (MLAHGSNDYGVSLKGNKTGSSPSKASSLNWNE) is disordered. The span at 15–32 (GNKTGSSPSKASSLNWNE) shows a compositional bias: polar residues. Residues 40 to 94 (NTYCYCGKDRNLRFPDLQCSVCLNMFHLSCLSPPCTSMMGFSTNYQFVCKHCTED) form a PHD-type zinc finger. Zn(2+) is bound by residues C43, C45, C58, C61, H66, C69, C88, and C91. Residues 234-270 (RLVETETPPPSSSKLKEDYKDSKREMKRSNTPWSNAS) form a disordered region. Basic and acidic residues predominate over residues 247–261 (KLKEDYKDSKREMKR). The region spanning 330–519 (EAAKDLPNVM…KHNRYIDLPY (190 aa)) is the B30.2/SPRY domain.

This sequence belongs to the cclA family. In terms of assembly, component of the Set1 complex composed of ash2, sdc1, set1, shg1, spp1, swd1, swd2 and swd3. Component of the Lid2 complex composed of ash2, jmj3, lid2, sdc1 and snt2.

It is found in the nucleus. Its function is as follows. Component of the COMPASS (Set1C) complex that specifically mono-, di- and trimethylates histone H3 to form H3K4me1/2/3, which subsequently plays a role in telomere length maintenance and transcription elongation regulation. Regulates MAPK pathway and sporulation through H3K4 methylation. This Schizosaccharomyces pombe (strain 972 / ATCC 24843) (Fission yeast) protein is Set1 complex component ash2.